Reading from the N-terminus, the 341-residue chain is Glycerol-3-phosphate dehydrogenase [NAD(P)+] (341 aa).

Serine 15, tryptophan 16, arginine 36, and lysine 110 together coordinate NADPH. 3 residues coordinate sn-glycerol 3-phosphate: lysine 110, glycine 139, and serine 141. Position 143 (alanine 143) interacts with NADPH. Positions 194, 247, 257, 258, and 259 each coordinate sn-glycerol 3-phosphate. The active-site Proton acceptor is the lysine 194. An NADPH-binding site is contributed by arginine 258. NADPH-binding residues include valine 282 and glutamate 284.

It belongs to the NAD-dependent glycerol-3-phosphate dehydrogenase family.

The protein resides in the cytoplasm. The enzyme catalyses sn-glycerol 3-phosphate + NAD(+) = dihydroxyacetone phosphate + NADH + H(+). It carries out the reaction sn-glycerol 3-phosphate + NADP(+) = dihydroxyacetone phosphate + NADPH + H(+). The protein operates within membrane lipid metabolism; glycerophospholipid metabolism. Its function is as follows. Catalyzes the reduction of the glycolytic intermediate dihydroxyacetone phosphate (DHAP) to sn-glycerol 3-phosphate (G3P), the key precursor for phospholipid synthesis. This Xanthomonas euvesicatoria pv. vesicatoria (strain 85-10) (Xanthomonas campestris pv. vesicatoria) protein is Glycerol-3-phosphate dehydrogenase [NAD(P)+].